A 368-amino-acid chain; its full sequence is 4-hydroxy-3-methylbut-2-en-1-yl diphosphate synthase (flavodoxin) (368 aa).

Residues Cys-271, Cys-274, Cys-306, and Glu-313 each contribute to the [4Fe-4S] cluster site.

It belongs to the IspG family. [4Fe-4S] cluster is required as a cofactor.

The catalysed reaction is (2E)-4-hydroxy-3-methylbut-2-enyl diphosphate + oxidized [flavodoxin] + H2O + 2 H(+) = 2-C-methyl-D-erythritol 2,4-cyclic diphosphate + reduced [flavodoxin]. The protein operates within isoprenoid biosynthesis; isopentenyl diphosphate biosynthesis via DXP pathway; isopentenyl diphosphate from 1-deoxy-D-xylulose 5-phosphate: step 5/6. In terms of biological role, converts 2C-methyl-D-erythritol 2,4-cyclodiphosphate (ME-2,4cPP) into 1-hydroxy-2-methyl-2-(E)-butenyl 4-diphosphate. This Haemophilus influenzae (strain 86-028NP) protein is 4-hydroxy-3-methylbut-2-en-1-yl diphosphate synthase (flavodoxin).